An 874-amino-acid polypeptide reads, in one-letter code: Alanine--tRNA ligase (874 aa).

4 residues coordinate Zn(2+): H563, H567, C665, and H669.

It belongs to the class-II aminoacyl-tRNA synthetase family. Requires Zn(2+) as cofactor.

It localises to the cytoplasm. It carries out the reaction tRNA(Ala) + L-alanine + ATP = L-alanyl-tRNA(Ala) + AMP + diphosphate. Its function is as follows. Catalyzes the attachment of alanine to tRNA(Ala) in a two-step reaction: alanine is first activated by ATP to form Ala-AMP and then transferred to the acceptor end of tRNA(Ala). Also edits incorrectly charged Ser-tRNA(Ala) and Gly-tRNA(Ala) via its editing domain. The chain is Alanine--tRNA ligase from Actinobacillus succinogenes (strain ATCC 55618 / DSM 22257 / CCUG 43843 / 130Z).